A 385-amino-acid chain; its full sequence is 3,5,7-trioxododecanoyl-CoA synthase (385 aa).

The active site involves Cys157.

This sequence belongs to the thiolase-like superfamily. Chalcone/stilbene synthases family. As to expression, expressed in bracts, flowers and young leaves. Not detected in mature leaves, roots and stems. Expressed in glandular trichomes.

The enzyme catalyses hexanoyl-CoA + 3 malonyl-CoA + 3 H(+) = 3,5,7-trioxododecanoyl-CoA + 3 CO2 + 3 CoA. The catalysed reaction is 3,5,7-trioxododecanoyl-CoA = olivetol + CO2 + CoA. It participates in secondary metabolite biosynthesis; terpenoid biosynthesis. In terms of biological role, involved in the biosynthesis of cannabinoids-related terpenophenolic natural products, which have pharmacological activity. Polyketide synthase responsible for olivetol biosynthesis, from a C(12)-polyketide, probably 3,5,7-trioxododecanoyl-CoA. Catalyzes the first step in the cannabinoids biosynthetic pathway. The preferred substrate is hexanoyl-CoA, but also accepts CoA esters with C4 to C8 aliphatic side chains. When using malonyl-CoA and hexanoyl-CoA as substrates, produces undetermined compounds distinct form olivetol or olivetolic acid that could be hexanoyl triacetic acid lactone (HTAL) and pentyl diacetic acid lactone (PDAL). Produces olivetolic acid when acting in concert with olivetolic acid cyclase (OAC). This Cannabis sativa (Hemp) protein is 3,5,7-trioxododecanoyl-CoA synthase.